The primary structure comprises 118 residues: Large ribosomal subunit protein bL20 (118 aa).

Belongs to the bacterial ribosomal protein bL20 family.

Binds directly to 23S ribosomal RNA and is necessary for the in vitro assembly process of the 50S ribosomal subunit. It is not involved in the protein synthesizing functions of that subunit. In Syntrophotalea carbinolica (strain DSM 2380 / NBRC 103641 / GraBd1) (Pelobacter carbinolicus), this protein is Large ribosomal subunit protein bL20.